Here is a 299-residue protein sequence, read N- to C-terminus: tRNA pseudouridine synthase A (299 aa).

The active-site Nucleophile is Asp67. Tyr125 serves as a coordination point for substrate.

It belongs to the tRNA pseudouridine synthase TruA family. Homodimer.

It carries out the reaction uridine(38/39/40) in tRNA = pseudouridine(38/39/40) in tRNA. Functionally, formation of pseudouridine at positions 38, 39 and 40 in the anticodon stem and loop of transfer RNAs. The polypeptide is tRNA pseudouridine synthase A (Parasynechococcus marenigrum (strain WH8102)).